The chain runs to 273 residues: Probable branched-chain-amino-acid aminotransferase (273 aa).

Residue lysine 133 is modified to N6-(pyridoxal phosphate)lysine.

This sequence belongs to the class-IV pyridoxal-phosphate-dependent aminotransferase family. Pyridoxal 5'-phosphate is required as a cofactor.

The enzyme catalyses L-leucine + 2-oxoglutarate = 4-methyl-2-oxopentanoate + L-glutamate. The catalysed reaction is L-isoleucine + 2-oxoglutarate = (S)-3-methyl-2-oxopentanoate + L-glutamate. It carries out the reaction L-valine + 2-oxoglutarate = 3-methyl-2-oxobutanoate + L-glutamate. The protein operates within amino-acid biosynthesis; L-isoleucine biosynthesis; L-isoleucine from 2-oxobutanoate: step 4/4. It functions in the pathway amino-acid biosynthesis; L-leucine biosynthesis; L-leucine from 3-methyl-2-oxobutanoate: step 4/4. Its pathway is amino-acid biosynthesis; L-valine biosynthesis; L-valine from pyruvate: step 4/4. Acts on leucine, isoleucine and valine. This Thermotoga maritima (strain ATCC 43589 / DSM 3109 / JCM 10099 / NBRC 100826 / MSB8) protein is Probable branched-chain-amino-acid aminotransferase (ilvE).